A 379-amino-acid chain; its full sequence is Galactose-1-phosphate uridylyltransferase (379 aa).

Residues 1 to 21 form a disordered region; sequence MSRSGTDPQQRQQASEADAAA. A compositionally biased stretch (low complexity) spans 9–21; that stretch reads QQRQQASEADAAA. Position 75 (cysteine 75) interacts with Zn(2+). Residues alanine 81, 97–98, and asparagine 173 contribute to the UDP-alpha-D-glucose site; that span reads ND. Histidine 184 provides a ligand contact to Zn(2+). Histidine 186 functions as the Tele-UMP-histidine intermediate in the catalytic mechanism. Glutamine 188 contacts UDP-alpha-D-glucose. The Zn(2+) site is built by glutamate 202, histidine 301, histidine 319, and histidine 321. UDP-alpha-D-glucose contacts are provided by residues 334 to 337 and 339 to 340; these read KFMV and YE.

Belongs to the galactose-1-phosphate uridylyltransferase type 1 family. In terms of assembly, homodimer. The cofactor is Zn(2+).

The catalysed reaction is alpha-D-galactose 1-phosphate + UDP-alpha-D-glucose = alpha-D-glucose 1-phosphate + UDP-alpha-D-galactose. The protein operates within carbohydrate metabolism; galactose metabolism. Plays an important role in galactose metabolism. The sequence is that of Galactose-1-phosphate uridylyltransferase (GALT) from Homo sapiens (Human).